The primary structure comprises 372 residues: Spermidine/putrescine import ATP-binding protein PotA (372 aa).

Residues 11–241 (IELRSIKKSY…PANLFVARFI (231 aa)) enclose the ABC transporter domain. Residue 43 to 50 (GPSGCGKT) participates in ATP binding.

This sequence belongs to the ABC transporter superfamily. Spermidine/putrescine importer (TC 3.A.1.11.1) family. The complex is composed of two ATP-binding proteins (PotA), two transmembrane proteins (PotB and PotC) and a solute-binding protein (PotD).

It is found in the cell inner membrane. The enzyme catalyses ATP + H2O + polyamine-[polyamine-binding protein]Side 1 = ADP + phosphate + polyamineSide 2 + [polyamine-binding protein]Side 1.. Functionally, part of the ABC transporter complex PotABCD involved in spermidine/putrescine import. Responsible for energy coupling to the transport system. The chain is Spermidine/putrescine import ATP-binding protein PotA from Haemophilus influenzae (strain 86-028NP).